Reading from the N-terminus, the 257-residue chain is UPF0246 protein CPS_4102 (257 aa).

Belongs to the UPF0246 family.

The chain is UPF0246 protein CPS_4102 from Colwellia psychrerythraea (strain 34H / ATCC BAA-681) (Vibrio psychroerythus).